The chain runs to 1010 residues: Sodium/potassium-transporting ATPase subunit alpha-3 (1010 aa).

A disordered region spans residues 1-21 (MGDKGEKESPKKGKGKRDLDD). At 1–74 (MGDKGEKESP…NALTPPPTTP (74 aa)) the chain is on the cytoplasmic side. The interaction with phosphoinositide-3 kinase stretch occupies residues 69 to 71 (PPP). A helical membrane pass occupies residues 75-95 (EWVKFCRQLFGGFSILLWIGA). The Extracellular segment spans residues 96–118 (ILCFLAYGIQAGTEDEPSNDNLY). A helical membrane pass occupies residues 119 to 139 (LGIVLAAVVIITGCFSYYQEA). The Cytoplasmic portion of the chain corresponds to 140-275 (KSSKIMESFK…VGKTPIAVEI (136 aa)). Residues 276-295 (EHFIQLITGVAVFLGISFFV) traverse the membrane as a helical segment. Residues 296–307 (LSLILGYTWLEA) are Extracellular-facing. A helical transmembrane segment spans residues 308–325 (VIFLIGIIVANVPEGLLA). Residues 326–759 (TVTVCLTLTA…EEGRLIFDNL (434 aa)) lie on the Cytoplasmic side of the membrane. Aspartate 363 acts as the 4-aspartylphosphate intermediate in catalysis. Mg(2+)-binding residues include aspartate 704 and aspartate 708. The chain crosses the membrane as a helical span at residues 760-779 (KKSIAYTLTSNIPEITPFLL). The Extracellular portion of the chain corresponds to 780–789 (FIMANIPLPL). A helical membrane pass occupies residues 790 to 810 (GTITILCIDLGTDMVPAISLA). At 811-830 (YEAAESDIMKRQPRNPRSDK) the chain is on the cytoplasmic side. Residues 831 to 853 (LVNERLISMAYGQIGMIQALGGF) form a helical membrane-spanning segment. Over 854-905 (FSYFVILAENGFLPSCLVGIRLSWDDRTINDLEDSYGQQWTYEQRKVVEFTC) the chain is Extracellular. A helical membrane pass occupies residues 906–925 (HTAFFVSIVVVQWADLIICK). The Cytoplasmic portion of the chain corresponds to 926–938 (TRRNSVFQQGMKN). Serine 930 is modified (phosphoserine; by PKA). The helical transmembrane segment at 939–957 (KILIFGLFEETALAAFLSY) threads the bilayer. Topologically, residues 958 to 972 (CPGMDVALRMYPLKP) are extracellular. The chain crosses the membrane as a helical span at residues 973-993 (SWWFCAFPYSFLIFVYDEIRK). The Cytoplasmic portion of the chain corresponds to 994–1010 (LILRRNPGGWVEKETYY).

Belongs to the cation transport ATPase (P-type) (TC 3.A.3) family. Type IIC subfamily. The sodium/potassium-transporting ATPase is composed of a catalytic alpha subunit, an auxiliary non-catalytic beta subunit and an additional regulatory subunit.

The protein resides in the cell membrane. It catalyses the reaction K(+)(out) + Na(+)(in) + ATP + H2O = K(+)(in) + Na(+)(out) + ADP + phosphate + H(+). Functionally, this is the catalytic component of the active enzyme, which catalyzes the hydrolysis of ATP coupled with the exchange of sodium and potassium ions across the plasma membrane. This action creates the electrochemical gradient of sodium and potassium ions, providing the energy for active transport of various nutrients. In Gallus gallus (Chicken), this protein is Sodium/potassium-transporting ATPase subunit alpha-3 (ATP1A3).